Consider the following 72-residue polypeptide: Large ribosomal subunit protein bL31 (72 aa).

The Zn(2+) site is built by cysteine 16, cysteine 18, cysteine 37, and cysteine 40.

This sequence belongs to the bacterial ribosomal protein bL31 family. Type A subfamily. In terms of assembly, part of the 50S ribosomal subunit. The cofactor is Zn(2+).

Binds the 23S rRNA. The chain is Large ribosomal subunit protein bL31 from Buchnera aphidicola subsp. Acyrthosiphon pisum (strain Tuc7).